Consider the following 268-residue polypeptide: Orotidine 5'-phosphate decarboxylase (268 aa).

Substrate contacts are provided by residues Asp-38, 60 to 62 (KTH), 92 to 101 (DRKFADIGNT), Tyr-218, and Arg-236. The Proton donor role is filled by Lys-94.

Belongs to the OMP decarboxylase family.

It catalyses the reaction orotidine 5'-phosphate + H(+) = UMP + CO2. Its pathway is pyrimidine metabolism; UMP biosynthesis via de novo pathway; UMP from orotate: step 2/2. The chain is Orotidine 5'-phosphate decarboxylase (URA3) from Candida parapsilosis (Yeast).